We begin with the raw amino-acid sequence, 178 residues long: Beta-lactoglobulin-1A/1C (178 aa).

The first 18 residues, 1–18 (MRCLLLTLGLALLCGVQA), serve as a signal peptide directing secretion. 2 cysteine pairs are disulfide-bonded: C84–C176 and C124–C137.

The protein belongs to the calycin superfamily. Lipocalin family. In terms of assembly, under physiological conditions beta-lactoglobulin exists as an equilibrium mixture of monomeric and dimeric forms.

The protein localises to the secreted. In terms of biological role, lactoglobulin is the primary component of whey, it binds retinol and is probably involved in the transport of that molecule. In Sus scrofa (Pig), this protein is Beta-lactoglobulin-1A/1C.